A 152-amino-acid chain; its full sequence is Cyanate hydratase (152 aa).

Active-site residues include Arg-98, Glu-101, and Ser-124.

It belongs to the cyanase family.

The catalysed reaction is cyanate + hydrogencarbonate + 3 H(+) = NH4(+) + 2 CO2. Functionally, catalyzes the reaction of cyanate with bicarbonate to produce ammonia and carbon dioxide. The chain is Cyanate hydratase from Uncinocarpus reesii (strain UAMH 1704).